We begin with the raw amino-acid sequence, 216 residues long: NKG2-D type II integral membrane protein (216 aa).

Residues 1 to 51 (MGWIRGRRSRHSWEMSEFHNYNLDLKKSDFSTRWQKQRCPVVKSKCRENAS) are Cytoplasmic-facing. A helical; Signal-anchor for type II membrane protein transmembrane segment spans residues 52–72 (PFFFCCFIAVAMGIRFIIMVT). The Extracellular segment spans residues 73 to 216 (IWSAVFLNSL…NTYICMQRTV (144 aa)). Disulfide bonds link Cys96–Cys105, Cys99–Cys110, Cys127–Cys211, and Cys189–Cys203. The C-type lectin domain occupies 98-213 (PCPKNWICYK…STPNTYICMQ (116 aa)). Residues Asn131, Asn163, and Asn202 are each glycosylated (N-linked (GlcNAc...) asparagine).

In terms of assembly, homodimer; disulfide-linked. Heterohexamer composed of two subunits of KLRK1 and four subunits of HCST/DAP10. Interacts (via transmembrane domain) with HCST/DAP10 (via transmembrane domain); the interaction is required for KLRK1 NK cell surface and induces NK cell-mediated cytotoxicity. Does not interact with TYROBP. Interacts with CEACAM1; recruits PTPN6 that dephosphorylates VAV1. In terms of tissue distribution, expressed in natural killer (NK) cells, CD8(+) alpha-beta and gamma-delta T-cells. Expressed on essentially all CD56+CD3- NK cells from freshly isolated PBMC. Expressed in interferon-producing killer dendritic cells (IKDCs).

The protein resides in the cell membrane. Functionally, functions as an activating and costimulatory receptor involved in immunosurveillance upon binding to various cellular stress-inducible ligands displayed at the surface of autologous tumor cells and virus-infected cells. Provides both stimulatory and costimulatory innate immune responses on activated killer (NK) cells, leading to cytotoxic activity. Acts as a costimulatory receptor for T-cell receptor (TCR) in CD8(+) T-cell-mediated adaptive immune responses by amplifying T-cell activation. Stimulates perforin-mediated elimination of ligand-expressing tumor cells. Signaling involves calcium influx, culminating in the expression of TNF-alpha. Participates in NK cell-mediated bone marrow graft rejection. May play a regulatory role in differentiation and survival of NK cells. Binds to ligands belonging to various subfamilies of MHC class I-related glycoproteins including MICA, MICB, RAET1E, RAET1G, RAET1L/ULBP6, ULBP1, ULBP2, ULBP3 (ULBP2&gt;ULBP1&gt;ULBP3) and ULBP4. The polypeptide is NKG2-D type II integral membrane protein (KLRK1) (Homo sapiens (Human)).